Consider the following 518-residue polypeptide: Cytokinin hydroxylase (518 aa).

A helical transmembrane segment spans residues 1–21; it reads MLLTILKSLLVIFVTTILRVL. Cys-464 contacts heme.

This sequence belongs to the cytochrome P450 family. It depends on heme as a cofactor. In terms of tissue distribution, expressed in roots and flowers.

The protein resides in the membrane. It catalyses the reaction N(6)-(dimethylallyl)adenosine 5'-phosphate + NADPH + O2 + H(+) = 9-ribosyl-trans-zeatin 5'-phosphate + NADP(+) + H2O. The enzyme catalyses N(6)-(dimethylallyl)adenosine 5'-diphosphate + NADPH + O2 + H(+) = 9-ribosyl-trans-zeatin 5'-diphosphate + NADP(+) + H2O. The catalysed reaction is N(6)-(dimethylallyl)adenosine 5'-triphosphate + NADPH + O2 + H(+) = 9-ribosyl-trans-zeatin 5'-triphosphate + NADP(+) + H2O. Cytokinin hydroxylase that catalyzes the biosynthesis of trans-zeatin via the isopentenyladenine riboside 5'-monophosphate (iPRMP)-dependent pathway. Can use isopentenyladenosine-5'-monophosphate, isopentenyladenosine-5'-diphosphate and isopentenyladenosine-5'-triphosphate as substrate. In Arabidopsis thaliana (Mouse-ear cress), this protein is Cytokinin hydroxylase (CYP735A1).